The chain runs to 141 residues: Putative 8-oxo-dGTP diphosphatase 2 (141 aa).

Residues 2–131 (LNQIVVAGAI…WIADLARTLN (130 aa)) enclose the Nudix hydrolase domain. Mg(2+)-binding residues include Gly-37, Glu-52, Glu-55, and Glu-56. The Nudix box motif lies at 37–58 (GKVAAGETERAALARELAEELG).

The protein belongs to the Nudix hydrolase family. The cofactor is Mg(2+). Mn(2+) is required as a cofactor.

The enzyme catalyses 8-oxo-dGTP + H2O = 8-oxo-dGMP + diphosphate + H(+). Its function is as follows. May be involved in the GO system responsible for removing an oxidatively damaged form of guanine (7,8-dihydro-8-oxoguanine, 8-oxo-dGTP) from DNA and the nucleotide pool. 8-oxo-dGTP is inserted opposite dA and dC residues of template DNA with almost equal efficiency thus leading to A.T to G.C transversions. MutT specifically degrades 8-oxo-dGTP to the monophosphate. The polypeptide is Putative 8-oxo-dGTP diphosphatase 2 (mutT2) (Mycobacterium tuberculosis (strain CDC 1551 / Oshkosh)).